Here is a 175-residue protein sequence, read N- to C-terminus: MDFKQYSPEELKECSMIEVVHSVLGDKRQATTFNELVQEIAQVLGLSQEQVNAKIAQFYTDLNIDGRFINLGENRWGLRSWYPYEQIDEEILPQPKPKKKRKVEDDGFDDYIEEDEDFDDADVTEDEDDDVEDLDKVLEDEDGDDDDLDDLDEDEDDFAEEELEYDETEEEEEEL.

In terms of domain architecture, HTH HARE-type spans 14–81; sequence CSMIEVVHSV…GENRWGLRSW (68 aa). The segment at 91 to 175 is disordered; sequence ILPQPKPKKK…DETEEEEEEL (85 aa). Residues 106–175 show a composition bias toward acidic residues; sequence DGFDDYIEED…DETEEEEEEL (70 aa).

The protein belongs to the RpoE family. RNAP is composed of a core of 2 alpha, a beta and a beta' subunits. The core is associated with a delta subunit and one of several sigma factors.

In terms of biological role, participates in both the initiation and recycling phases of transcription. In the presence of the delta subunit, RNAP displays an increased specificity of transcription, a decreased affinity for nucleic acids, and an increased efficiency of RNA synthesis because of enhanced recycling. The sequence is that of Probable DNA-directed RNA polymerase subunit delta from Bacillus anthracis.